We begin with the raw amino-acid sequence, 214 residues long: Adenylate kinase (214 aa).

10-15 (GTGKGT) lines the ATP pocket. Residues 30–59 (STGDILRENIQKKNTIGKKIHNILKNGELV) are NMP. Residues threonine 31, arginine 36, 57–59 (ELV), 85–88 (GFPR), and glutamine 92 contribute to the AMP site. The LID stretch occupies residues 122–159 (GRRVHTPSGRIYNINYNPPREEGKDDLTQEKLTIREDD). ATP contacts are provided by residues arginine 123 and 132-133 (IY). Residues arginine 156 and arginine 167 each coordinate AMP. Residue glutamine 200 coordinates ATP.

Belongs to the adenylate kinase family. Monomer.

It localises to the cytoplasm. It catalyses the reaction AMP + ATP = 2 ADP. Its pathway is purine metabolism; AMP biosynthesis via salvage pathway; AMP from ADP: step 1/1. Functionally, catalyzes the reversible transfer of the terminal phosphate group between ATP and AMP. Plays an important role in cellular energy homeostasis and in adenine nucleotide metabolism. The sequence is that of Adenylate kinase from Buchnera aphidicola subsp. Schizaphis graminum (strain Sg).